We begin with the raw amino-acid sequence, 301 residues long: Homeobox protein Hox-D13 (301 aa).

2 disordered regions span residues 1-20 (MDGL…TPGQ) and 55-75 (GERS…PGSG). Gly residues predominate over residues 8-18 (SSGGGGGGGTP). Residues 234-293 (GRKKRVPYTKLQLKELENEYAINKFINKDKRRRISAATNLSERQVTIWFQNRRVKDKKIV) constitute a DNA-binding region (homeobox).

It belongs to the Abd-B homeobox family.

It localises to the nucleus. Its function is as follows. Sequence-specific transcription factor that binds gene promoters and activates their transcription. Part of a developmental regulatory system that provides cells with specific positional identities on the anterior-posterior axis. In Gallus gallus (Chicken), this protein is Homeobox protein Hox-D13 (HOXD13).